A 333-amino-acid polypeptide reads, in one-letter code: Phosphate acyltransferase (333 aa).

It belongs to the PlsX family. In terms of assembly, homodimer. Probably interacts with PlsY.

The protein localises to the cytoplasm. The catalysed reaction is a fatty acyl-[ACP] + phosphate = an acyl phosphate + holo-[ACP]. Its pathway is lipid metabolism; phospholipid metabolism. Its function is as follows. Catalyzes the reversible formation of acyl-phosphate (acyl-PO(4)) from acyl-[acyl-carrier-protein] (acyl-ACP). This enzyme utilizes acyl-ACP as fatty acyl donor, but not acyl-CoA. The sequence is that of Phosphate acyltransferase from Thermosipho melanesiensis (strain DSM 12029 / CIP 104789 / BI429).